The primary structure comprises 140 residues: Small ribosomal subunit protein uS12m (140 aa).

It belongs to the universal ribosomal protein uS12 family.

It is found in the mitochondrion. This chain is Small ribosomal subunit protein uS12m (mrps12), found in Dictyostelium discoideum (Social amoeba).